Reading from the N-terminus, the 537-residue chain is O-phosphoserine--tRNA(Cys) ligase (537 aa).

Substrate is bound by residues 186–188, 231–233, 273–274, and N317; these read HMT, SAS, and YY.

It belongs to the class-II aminoacyl-tRNA synthetase family. O-phosphoseryl-tRNA(Cys) synthetase subfamily. Homotetramer. Interacts with SepCysS.

It carries out the reaction tRNA(Cys) + O-phospho-L-serine + ATP = O-phospho-L-seryl-tRNA(Cys) + AMP + diphosphate. In terms of biological role, catalyzes the attachment of O-phosphoserine (Sep) to tRNA(Cys). This chain is O-phosphoserine--tRNA(Cys) ligase, found in Methanococcus vannielii (strain ATCC 35089 / DSM 1224 / JCM 13029 / OCM 148 / SB).